A 713-amino-acid chain; its full sequence is Fibroblast growth factor receptor 4 (713 aa).

An N-terminal signal peptide occupies residues M1 to S20. Residues H21–Y54 form a disordered region. At H21 to D281 the chain is on the extracellular side. Basic and acidic residues predominate over residues D42–Y54. Ig-like C2-type domains lie at P59–D152 and P161–T261. A disulfide bridge links C84 with C136. N133, N170, N202, N223, and N234 each carry an N-linked (GlcNAc...) asparagine glycan. A disulfide bridge links C183 with C245. The helical transmembrane segment at I282–C302 threads the bilayer. Over R303–T713 the chain is Cytoplasmic. A Protein kinase domain is found at L379–L667. Residues L385–V393 and K415 contribute to the ATP site. The active-site Proton acceptor is D524. 3 positions are modified to phosphotyrosine; by autocatalysis: Y554, Y555, and Y666.

This sequence belongs to the protein kinase superfamily. Tyr protein kinase family. Fibroblast growth factor receptor subfamily. In terms of assembly, monomer. Homodimer after ligand binding. Interacts with FGF1, FGF2, FGF4, FGF6, FGF8, FGF9, FGF16, FGF17, FGF18, FGF19, FGF21 and FGF23 (in vitro). Binding affinity for FGF family members is enhanced by interactions between FGFs and heparan sulfate proteoglycans. Interacts with KLB; this strongly increases the affinity for FGF19 and FGF23. Affinity for FGF19 is strongly increased by KLB and sulfated glycosaminoglycans. KLB and KL both interact with the core-glycosylated FGFR4 in the endoplasmic reticulum and promote its degradation, so that only FGFR4 with fully mature N-glycans is expressed at the cell surface. Identified in a complex with NCAM1, CDH2, PLCG1, FRS2, SRC, SHC1, GAP43 and CTTN. Interacts with MMP14 and HIP1. Interacts with STAT3. In terms of processing, N-glycosylated. Full maturation of the glycan chains in the Golgi is essential for high affinity interaction with FGF19. Ubiquitinated. Subject to proteasomal degradation when not fully glycosylated. Post-translationally, autophosphorylated. Binding of FGF family members together with heparan sulfate proteoglycan or heparin promotes receptor dimerization and autophosphorylation on tyrosine residues. Autophosphorylation occurs in trans between the two FGFR molecules present in the dimer.

The protein resides in the cell membrane. Its subcellular location is the endosome. The protein localises to the endoplasmic reticulum. It carries out the reaction L-tyrosyl-[protein] + ATP = O-phospho-L-tyrosyl-[protein] + ADP + H(+). Present in an inactive conformation in the absence of bound ligand. Ligand binding leads to dimerization and activation by autophosphorylation on tyrosine residues. In terms of biological role, tyrosine-protein kinase that acts as a cell-surface receptor for fibroblast growth factors and plays a role in the regulation of cell proliferation, differentiation and migration, and in regulation of lipid metabolism, bile acid biosynthesis, glucose uptake, vitamin D metabolism and phosphate homeostasis. Required for normal down-regulation of the expression of CYP7A1, the rate-limiting enzyme in bile acid synthesis, in response to FGF19. Phosphorylates PLCG1 and FRS2. Ligand binding leads to the activation of several signaling cascades. Activation of PLCG1 leads to the production of the cellular signaling molecules diacylglycerol and inositol 1,4,5-trisphosphate. Phosphorylation of FRS2 triggers recruitment of GRB2, GAB1, PIK3R1 and SOS1, and mediates activation of RAS, MAPK1/ERK2, MAPK3/ERK1 and the MAP kinase signaling pathway, as well as of the AKT1 signaling pathway. Promotes SRC-dependent phosphorylation of the matrix protease MMP14 and its lysosomal degradation. FGFR4 signaling is down-regulated by receptor internalization and degradation; MMP14 promotes internalization and degradation of FGFR4. In Coturnix coturnix (Common quail), this protein is Fibroblast growth factor receptor 4 (FGFR4).